Consider the following 463-residue polypeptide: MDDIEDSLDQWKFAQCFGDKGDVEDITEADIISAVEFDHTGDYLATGDKGGRVVLFERNHSKKGCEYKFFTEFQSHEPEFDYLKSLEIEEKINKIRWCKRTNRAHFLLSTNDKTIKLWKLYEKNLKVVAENNLSDSFHSPMQGPLTTPSQLRLPRLNHHDMIIAAYPRRVYANAHAYHINSISVNSDAETYISADDLRINLWNLSISDHSFNIVDIKPENMEELTEVITSAEFHPINCNHLMYSSSKGNIKLLDLRQSALCDNPCKLFEDQEDQDSKSFFSEIISSISDVKFSQNGRYILSRDYLTLKIWDVNMEKAPVKTIPLHDVLRSKLCDLYENDCIFDKFECTFSGDDKHVLSGSYSNNFGIYPTDSSLPGDRGQIVLQADKAAFRARKSAANNVPKLNAVKNNDWRSQPQAAMGSASVGLDPDNLDYNKKILHASWHPFEDSVAIAATNNLFVFSKL.

WD repeat units follow at residues 27-66 (TEADIISAVEFDHTGDYLATGDKGGRVVLFERNHSKKGCE) and 87-128 (EIEE…LKVV). Serine 134 bears the Phosphoserine mark. WD repeat units lie at residues 174–212 (AHAYHINSISVNSDAETYISADDLRINLWNLSISDHSFN), 223–263 (ELTE…LCDN), 282–320 (EIISSISDVKFSQNGRYILSRDYLTLKIWDVNMEKAPVK), and 337–378 (ENDC…PGDR).

Belongs to the phosphatase 2A regulatory subunit B family. In terms of assembly, PP2A exists in several trimeric forms, all of which consist of a core composed of a catalytic subunit associated with a 65 kDa (PR65) (Subunit A) and a 55 kDa (PR55) (Subunit B) regulatory subunit.

Functionally, phosphatase 2A affects a variety of biological processes in the cell such as transcription, cell cycle progression and cellular morphogenesis, and provides an initial identification of critical substrates for this phosphatase. The regulatory subunit may direct the catalytic subunit to distinct, albeit overlapping, subsets of substrates. The sequence is that of Protein phosphatase PP2A regulatory subunit B (pab1) from Schizosaccharomyces pombe (strain 972 / ATCC 24843) (Fission yeast).